We begin with the raw amino-acid sequence, 494 residues long: Hexokinase-2 (494 aa).

The Hexokinase domain maps to 32 to 483; it reads GRADAVLREL…SGIGAALLAA (452 aa). The tract at residues 87–225 is hexokinase small subdomain; that stretch reads SGEEKGVFYA…GLDMKVTALI (139 aa). ADP is bound by residues Gly101, Thr102, and Asn103. The D-glucose site is built by Thr191, Lys192, Asn226, and Asp227. The hexokinase large subdomain stretch occupies residues 226–472; sequence NDTIGTLAGG…STIVIKLAKD (247 aa). Thr250 is an ADP binding site. Asn253, Glu281, and Glu312 together coordinate D-glucose. Position 437 (Gly437) interacts with ADP.

Belongs to the hexokinase family. As to expression, expressed in roots, leaves, flowers, immature seeds, endosperm and seed coat.

It catalyses the reaction a D-hexose + ATP = a D-hexose 6-phosphate + ADP + H(+). It carries out the reaction D-fructose + ATP = D-fructose 6-phosphate + ADP + H(+). The catalysed reaction is D-glucose + ATP = D-glucose 6-phosphate + ADP + H(+). Its pathway is carbohydrate metabolism; hexose metabolism. It participates in carbohydrate degradation; glycolysis; D-glyceraldehyde 3-phosphate and glycerone phosphate from D-glucose: step 1/4. Its function is as follows. Fructose and glucose phosphorylating enzyme. The chain is Hexokinase-2 (HXK2) from Oryza sativa subsp. japonica (Rice).